The sequence spans 567 residues: Septation ring formation regulator EzrA (567 aa).

The Extracellular portion of the chain corresponds to 1–2; the sequence is ME. The chain crosses the membrane as a helical span at residues 3–21; it reads IAVIVLLLLGGVMIYNHVY. The Cytoplasmic segment spans residues 22-567; it reads RKKMYSEIDR…IFRDERSKEE (546 aa). Coiled coils occupy residues 97–188 and 254–465; these read RYAK…LTAS and REIV…LEEK.

Belongs to the EzrA family.

Its subcellular location is the cell membrane. Its function is as follows. Negative regulator of FtsZ ring formation; modulates the frequency and position of FtsZ ring formation. Inhibits FtsZ ring formation at polar sites. Interacts either with FtsZ or with one of its binding partners to promote depolymerization. The sequence is that of Septation ring formation regulator EzrA from Geobacillus sp. (strain WCH70).